Reading from the N-terminus, the 363-residue chain is MDAKLSPEQGLNISGIALASLLAVGLGTTAFFLDSMANRLPWQSMSLTLPLLLCAMGSGVVGFWVIPLLQALKTGQIIREDGPQAHLKKAGTPTMGGIFFIPVGVIIACILSNFATDVLAVSALTTSYGFIGWLDDWQILRRKSNKGISPRTKLALQVGFAAVFCLWLMFNQPSNITNIALPWVSFTLPLGFLFWPLAGFVLVAESNATNLTDGIDGLAAGTVAIALLALGALIAPTAPGLMVFCAALSGGCLGFLAHNRNPARVFMGDTGSLALGGALAAVALLTNTLVALFILSGIFFVETLSVMAQVSYYKATKGPDGKGKRLFKMAPLHHHLELTGWSELQVVGVFYVIAAILAAICLA.

Helical transmembrane passes span 13–33, 49–69, 95–115, 119–139, 154–174, 183–203, 224–244, 281–301, and 343–363; these read ISGI…AFFL, LPLL…IPLL, MGGI…SNFA, LAVS…DWQI, LALQ…NQPS, WVSF…FVLV, AIAL…LMVF, AVAL…IFFV, and ELQV…ICLA.

It belongs to the glycosyltransferase 4 family. MraY subfamily. Mg(2+) is required as a cofactor.

It is found in the cell inner membrane. The enzyme catalyses UDP-N-acetyl-alpha-D-muramoyl-L-alanyl-gamma-D-glutamyl-meso-2,6-diaminopimeloyl-D-alanyl-D-alanine + di-trans,octa-cis-undecaprenyl phosphate = di-trans,octa-cis-undecaprenyl diphospho-N-acetyl-alpha-D-muramoyl-L-alanyl-D-glutamyl-meso-2,6-diaminopimeloyl-D-alanyl-D-alanine + UMP. It participates in cell wall biogenesis; peptidoglycan biosynthesis. Functionally, catalyzes the initial step of the lipid cycle reactions in the biosynthesis of the cell wall peptidoglycan: transfers peptidoglycan precursor phospho-MurNAc-pentapeptide from UDP-MurNAc-pentapeptide onto the lipid carrier undecaprenyl phosphate, yielding undecaprenyl-pyrophosphoryl-MurNAc-pentapeptide, known as lipid I. The chain is Phospho-N-acetylmuramoyl-pentapeptide-transferase from Nostoc punctiforme (strain ATCC 29133 / PCC 73102).